The chain runs to 80 residues: Caltrin (80 aa).

An N-terminal signal peptide occupies residues M1–P32.

In terms of biological role, inhibits calcium transport into spermatozoa; it does not bind directly to calcium. Binds to calmodulin. Inhibits the growth of microorganisms. Seem to act as an antibiotic by permeabilizing the bacterial membrane. This Bos taurus (Bovine) protein is Caltrin (PYY2).